Reading from the N-terminus, the 98-residue chain is NADH-ubiquinone oxidoreductase chain 4L (98 aa).

3 helical membrane passes run 1-21 (MSLIHMNIIMAFTLSLVGLLM), 29-49 (ALLCMEGMMLSLFILATLTAL), and 59-79 (MPIILLVFAACEAAIGLALLV).

It belongs to the complex I subunit 4L family. As to quaternary structure, core subunit of respiratory chain NADH dehydrogenase (Complex I) which is composed of 45 different subunits.

It is found in the mitochondrion inner membrane. It carries out the reaction a ubiquinone + NADH + 5 H(+)(in) = a ubiquinol + NAD(+) + 4 H(+)(out). Functionally, core subunit of the mitochondrial membrane respiratory chain NADH dehydrogenase (Complex I) which catalyzes electron transfer from NADH through the respiratory chain, using ubiquinone as an electron acceptor. Part of the enzyme membrane arm which is embedded in the lipid bilayer and involved in proton translocation. The sequence is that of NADH-ubiquinone oxidoreductase chain 4L (MT-ND4L) from Hyperoodon ampullatus (Northern bottlenose whale).